The primary structure comprises 526 residues: ATP synthase subunit alpha (526 aa).

171-178 (GDRQTGKT) provides a ligand contact to ATP.

The protein belongs to the ATPase alpha/beta chains family. As to quaternary structure, F-type ATPases have 2 components, CF(1) - the catalytic core - and CF(0) - the membrane proton channel. CF(1) has five subunits: alpha(3), beta(3), gamma(1), delta(1), epsilon(1). CF(0) has four main subunits: a, b, b' and c.

The protein localises to the cell inner membrane. The enzyme catalyses ATP + H2O + 4 H(+)(in) = ADP + phosphate + 5 H(+)(out). Functionally, produces ATP from ADP in the presence of a proton gradient across the membrane. The alpha chain is a regulatory subunit. The polypeptide is ATP synthase subunit alpha (Pelodictyon phaeoclathratiforme (strain DSM 5477 / BU-1)).